A 224-amino-acid chain; its full sequence is UPF0758 protein NE1464 (224 aa).

The MPN domain maps to 102–224; it reads IMDSPQSVRN…VVSFAERGLI (123 aa). Positions 173, 175, and 186 each coordinate Zn(2+). The short motif at 173-186 is the JAMM motif element; sequence HNHPSGIAEPSTAD.

This sequence belongs to the UPF0758 family.

The protein is UPF0758 protein NE1464 of Nitrosomonas europaea (strain ATCC 19718 / CIP 103999 / KCTC 2705 / NBRC 14298).